The primary structure comprises 401 residues: MGLKALCLGLLCVLFVSHFYTPMPDNIEESWKIMALDAIAKTCTFTAMCFENMRIMRYEEFISMIFRLDYTQPLSDEYITVTDTTFVDIPVRLYLPKRKSETRRRAVIYFHGGGFCFGSSKQRAFDFLNRWTANTLDAVVVGVDYRLAPQHHFPAQFEDGLAAVKFFLLEKILTKYGVDPTRICIAGDSSGGNLATAVTQQVQNDAEIKHKIKMQVLLYPGLQITDSYLPSHRENEHGIVLTRDVAIKLVSLYFTKDEALPWAMRRNQHMPLESRHLFKFVNWSILLPEKYRKDYVYTEPILGGLSYSLPGLTDSRALPLLANDSQLQNLPLTYILTCQHDLLRDDGLMYVTRLRNVGVQVVHEHIEDGIHGALSFMTSPFYLRLGLRIRDMYVSWLDKNL.

Positions 1–18 (MGLKALCLGLLCVLFVSH) are cleaved as a signal peptide. An Involved in the stabilization of the negatively charged intermediate by the formation of the oxyanion hole motif is present at residues 111 to 113 (HGG). An intrachain disulfide couples C116 to C338. Residues S189, D341, and H371 contribute to the active site.

Belongs to the 'GDXG' lipolytic enzyme family.

Its subcellular location is the secreted. This is Arylacetamide deacetylase-like 2 (AADACL2) from Homo sapiens (Human).